Here is a 149-residue protein sequence, read N- to C-terminus: Protein AE7-like 2 (149 aa).

Belongs to the MIP18 family.

May play a role in chromosome segregation through establishment of sister chromatid cohesion. Unable to complement ae7 mutants, and thus probably not involved in the cytosolic iron-sulfur assembly (CIA) pathway. The protein is Protein AE7-like 2 of Arabidopsis thaliana (Mouse-ear cress).